Consider the following 332-residue polypeptide: MDPRSEVLLRQRHLFAAPTLLAGLPADDLLAELPLAHGWSWHAGEQAQLDARFPGRSRFDTRAPVGAWSAAVVFLPKSRELADYLLASLAARLPGGELFLVGEKRGGIERASKQLAAYGRPRKLDSARHCQLWQVQVEQAPAEPDLLALAQRYSLPLADGELQVVSLPGVFSHGRLDRGSALLLEHLDDLPKGHLLDFGCGAGVLGALVKRRYPASRLTLLDVDAFAVASSRLTLAANGLDGEVIAADGIDGAPRGLAAIVSNPPFHQGVHTDYQASERLLQRAAEHLAAGGELRLVANSFLKYPPLIERHLGPCRTLAEGDGFRVYTARRP.

It belongs to the methyltransferase superfamily. RsmC family. As to quaternary structure, monomer.

Its subcellular location is the cytoplasm. The enzyme catalyses guanosine(1207) in 16S rRNA + S-adenosyl-L-methionine = N(2)-methylguanosine(1207) in 16S rRNA + S-adenosyl-L-homocysteine + H(+). Functionally, specifically methylates the guanine in position 1207 of 16S rRNA in the 30S particle. This Pseudomonas paraeruginosa (strain DSM 24068 / PA7) (Pseudomonas aeruginosa (strain PA7)) protein is Ribosomal RNA small subunit methyltransferase C.